The chain runs to 356 residues: GMP reductase (356 aa).

NADP(+) contacts are provided by residues 26–27 (SR), lysine 78, 132–134 (DVA), and 183–184 (IG). 3 residues coordinate K(+): glycine 184, glycine 186, and cysteine 189. Cysteine 189 serves as the catalytic Thioimidate intermediate. Threonine 191 acts as the Proton donor/acceptor in catalysis. Arginine 192 contacts K(+). GMP-binding positions include 222–224 (DGG), 245–246 (GG), 271–273 (GMS), and 289–293 (RASEG). NADP(+)-binding positions include methionine 272, 288–289 (YR), and 317–320 (SACT).

It belongs to the IMPDH/GMPR family.

The catalysed reaction is IMP + NH4(+) + NADP(+) = GMP + NADPH + 2 H(+). Catalyzes the irreversible NADPH-dependent deamination of GMP to IMP. It functions in the conversion of nucleobase, nucleoside and nucleotide derivatives of G to A nucleotides, and in maintaining the intracellular balance of A and G nucleotides. This chain is GMP reductase, found in Ascaris suum (Pig roundworm).